The following is a 343-amino-acid chain: Putative kinase HI_0665 (343 aa).

D209 acts as the Proton acceptor in catalysis.

This sequence belongs to the HipA Ser/Thr kinase family.

This is Putative kinase HI_0665 from Haemophilus influenzae (strain ATCC 51907 / DSM 11121 / KW20 / Rd).